The primary structure comprises 239 residues: 2,3,4,5-tetrahydropyridine-2,6-dicarboxylate N-acetyltransferase (239 aa).

Belongs to the transferase hexapeptide repeat family. DapH subfamily.

The catalysed reaction is (S)-2,3,4,5-tetrahydrodipicolinate + acetyl-CoA + H2O = L-2-acetamido-6-oxoheptanedioate + CoA. It participates in amino-acid biosynthesis; L-lysine biosynthesis via DAP pathway; LL-2,6-diaminopimelate from (S)-tetrahydrodipicolinate (acetylase route): step 1/3. Catalyzes the transfer of an acetyl group from acetyl-CoA to tetrahydrodipicolinate. This is 2,3,4,5-tetrahydropyridine-2,6-dicarboxylate N-acetyltransferase from Staphylococcus carnosus (strain TM300).